A 585-amino-acid polypeptide reads, in one-letter code: Serine/threonine-protein kinase PknI (585 aa).

The Cytoplasmic portion of the chain corresponds to 1–349 (MALASGVTFA…ASPTRRRPRR (349 aa)). In terms of domain architecture, Protein kinase spans 12 to 252 (YTVVRMLGCS…SCREFADAMN (241 aa)). ATP-binding positions include 18-26 (LGCSAMGEV) and Lys41. Residues Lys41, Asp90, and Val92 each coordinate ADP. Asp137 serves as the catalytic Proton acceptor. A helical transmembrane segment spans residues 350–370 (ILVGAVAVLLLAGLFAVGIVI). Over 371-585 (GRKTNTTATE…PTTTAPGPGR (215 aa)) the chain is Extracellular. The disordered stretch occupies residues 546–585 (SGDLPPAVTVPDPATIPDTPDTTSTATLTPPTTTAPGPGR). The span at 554–585 (TVPDPATIPDTPDTTSTATLTPPTTTAPGPGR) shows a compositional bias: low complexity.

The protein belongs to the protein kinase superfamily. Ser/Thr protein kinase family. The cofactor is Mn(2+). In terms of processing, autophosphorylated at serine and threonine residues.

The protein resides in the cytoplasm. Its subcellular location is the cell membrane. The catalysed reaction is L-seryl-[protein] + ATP = O-phospho-L-seryl-[protein] + ADP + H(+). The enzyme catalyses L-threonyl-[protein] + ATP = O-phospho-L-threonyl-[protein] + ADP + H(+). In terms of biological role, plays an important role in slowing down the growth of mycobacteria within the infected host. The chain is Serine/threonine-protein kinase PknI (pknI) from Mycobacterium bovis (strain ATCC BAA-935 / AF2122/97).